We begin with the raw amino-acid sequence, 404 residues long: Glucose-1-phosphate adenylyltransferase (404 aa).

Residues tyrosine 99, glycine 164, 179–180, and serine 197 contribute to the alpha-D-glucose 1-phosphate site; that span reads EK.

It belongs to the bacterial/plant glucose-1-phosphate adenylyltransferase family.

The enzyme catalyses alpha-D-glucose 1-phosphate + ATP + H(+) = ADP-alpha-D-glucose + diphosphate. The protein operates within capsule biogenesis; capsule polysaccharide biosynthesis. Its pathway is glycan biosynthesis; glycogen biosynthesis. Involved in the biosynthesis of ADP-glucose, a building block, required in the biosynthesis of maltose-1-phosphate (M1P) and in the elongation reactions to produce linear alpha-1,4-glucans. Catalyzes the reaction between ATP and alpha-D-glucose 1-phosphate (G1P) to produce pyrophosphate and ADP-Glc. This Mycobacterium ulcerans (strain Agy99) protein is Glucose-1-phosphate adenylyltransferase.